The primary structure comprises 99 residues: Protein dpy-30 homolog (99 aa).

Residue M1 is modified to N-acetylmethionine. Residues 1–26 (MESEQMLEGQTQVAENPHSEYGLTDS) form a disordered region. At S19 the chain carries Phosphoserine. Residue K35 is modified to N6-acetyllysine; alternate. A Glycyl lysine isopeptide (Lys-Gly) (interchain with G-Cter in SUMO2); alternate cross-link involves residue K35.

Belongs to the dpy-30 family. As to quaternary structure, homodimer. Core component of several methyltransferase-containing complexes including MLL1/MLL, MLL2/3 (also named ASCOM complex) and MLL4/WBP7. Each complex is at least composed of ASH2L, RBBP5, WDR5, DPY30, one or more specific histone methyltransferases (KMT2A/MLL1, KMT2D/MLL2, KMT2C/MLL3 and KMT2B/MLL4), and the facultative components MEN1, HCFC1, HCFC2, NCOA6, KDM6A, PAXIP1/PTIP, PAGR1 and alpha- and beta-tubulin PAXIP1/PTIP, PAGR1 and alpha- and beta-tubulin. Interacts with ASH2L. The interaction with ASH2L is direct. Interacts with ARFGEF1. Component of the SET1 complex, at least composed of the catalytic subunit (SETD1A or SETD1B), WDR5, WDR82, RBBP5, ASH2L/ASH2, CXXC1/CFP1, HCFC1 and DPY30.

Its subcellular location is the nucleus. The protein resides in the golgi apparatus. It localises to the trans-Golgi network. Its function is as follows. As part of the MLL1/MLL complex, involved in the methylation of histone H3 at 'Lys-4', particularly trimethylation. Histone H3 'Lys-4' methylation represents a specific tag for epigenetic transcriptional activation. May play some role in histone H3 acetylation. In embryonic stem (ES) cells, plays a crucial role in the differentiation potential, particularly along the neural lineage, regulating gene induction and histone H3 'Lys-4' methylation at key developmental loci, including that mediated by retinoic acid. Does not affect ES cell self-renewal. May also play an indirect or direct role in endosomal transport. In Mus musculus (Mouse), this protein is Protein dpy-30 homolog (Dpy30).